Reading from the N-terminus, the 107-residue chain is Iron-sulfur cluster assembly protein CyaY (107 aa).

The protein belongs to the frataxin family.

Its function is as follows. Involved in iron-sulfur (Fe-S) cluster assembly. May act as a regulator of Fe-S biogenesis. This is Iron-sulfur cluster assembly protein CyaY from Neisseria meningitidis serogroup C / serotype 2a (strain ATCC 700532 / DSM 15464 / FAM18).